Consider the following 70-residue polypeptide: Homeobox protein OTX2 (70 aa).

Positions 34–70 (HQLPGPGATLSPMGTNAVTSHLNQSPASLSTQGYGAS) are disordered. The segment covering 45 to 70 (PMGTNAVTSHLNQSPASLSTQGYGAS) has biased composition (polar residues).

This sequence belongs to the paired homeobox family. Bicoid subfamily.

The protein resides in the nucleus. Its function is as follows. Transcription factor probably involved in the development of the brain and the sense organs. Can bind to the bicoid/BCD target sequence (BTS): 5'-TCTAATCCC-3'. The sequence is that of Homeobox protein OTX2 (Otx2) from Rattus norvegicus (Rat).